We begin with the raw amino-acid sequence, 145 residues long: Large ribosomal subunit protein uL13 (145 aa).

This sequence belongs to the universal ribosomal protein uL13 family. As to quaternary structure, part of the 50S ribosomal subunit.

Its function is as follows. This protein is one of the early assembly proteins of the 50S ribosomal subunit, although it is not seen to bind rRNA by itself. It is important during the early stages of 50S assembly. This chain is Large ribosomal subunit protein uL13, found in Staphylococcus carnosus (strain TM300).